The sequence spans 201 residues: Retinol-binding protein 4 (201 aa).

A signal peptide spans 1 to 18 (MEWVWALVLLAALGSAQA). Disulfide bonds link C22-C178, C88-C192, and C138-C147. Q116 is a binding site for substrate. The residue at position 139 (R139) is an Omega-N-methylarginine.

The protein belongs to the calycin superfamily. Lipocalin family. As to quaternary structure, interacts with TTR. Interaction with TTR prevents its loss by filtration through the kidney glomeruli. Interacts with STRA6.

Its subcellular location is the secreted. Functionally, retinol-binding protein that mediates retinol transport in blood plasma. Delivers retinol from the liver stores to the peripheral tissues. Transfers the bound all-trans retinol to STRA6, that then facilitates retinol transport across the cell membrane. This chain is Retinol-binding protein 4 (RBP4), found in Sus scrofa (Pig).